The sequence spans 113 residues: Crustacean hyperglycemic hormones B (113 aa).

A signal peptide spans 1 to 26; that stretch reads MVAFRMMSMALLVVVASSWWASPVEA. Disulfide bonds link C46–C82, C62–C78, and C65–C91. At V111 the chain carries Valine amide.

The protein belongs to the arthropod CHH/MIH/GIH/VIH hormone family. Expressed at a constant level in the eyestalks of juveniles and mature females. A low level expression is seen in the central nervous system.

It is found in the secreted. Hormone found in the sinus gland of isopods and decapods which controls the blood sugar level. Has a secretagogue action over the amylase released from the midgut gland. May act as a stress hormone and may be involved in the control of molting and reproduction. The chain is Crustacean hyperglycemic hormones B from Metapenaeus ensis (Greasyback shrimp).